A 304-amino-acid polypeptide reads, in one-letter code: N-acetyl-D-glucosamine kinase (304 aa).

ATP-binding positions include 4 to 11 and 133 to 140; these read GLDIGGTK and GFGGGFVL. Histidine 157, cysteine 178, cysteine 180, and cysteine 185 together coordinate Zn(2+).

The protein belongs to the ROK (NagC/XylR) family. NagK subfamily.

It carries out the reaction N-acetyl-D-glucosamine + ATP = N-acetyl-D-glucosamine 6-phosphate + ADP + H(+). It participates in cell wall biogenesis; peptidoglycan recycling. In terms of biological role, catalyzes the phosphorylation of N-acetyl-D-glucosamine (GlcNAc) derived from cell-wall degradation, yielding GlcNAc-6-P. This Haemophilus influenzae (strain 86-028NP) protein is N-acetyl-D-glucosamine kinase.